The chain runs to 151 residues: Small ribosomal subunit protein uS13 (151 aa).

Belongs to the universal ribosomal protein uS13 family. In terms of assembly, part of the 30S ribosomal subunit. Forms a loose heterodimer with protein S19. Forms two bridges to the 50S subunit in the 70S ribosome.

In terms of biological role, located at the top of the head of the 30S subunit, it contacts several helices of the 16S rRNA. In the 70S ribosome it contacts the 23S rRNA (bridge B1a) and protein L5 of the 50S subunit (bridge B1b), connecting the 2 subunits; these bridges are implicated in subunit movement. The chain is Small ribosomal subunit protein uS13 from Methanospirillum hungatei JF-1 (strain ATCC 27890 / DSM 864 / NBRC 100397 / JF-1).